The following is a 500-amino-acid chain: Cysteine--tRNA ligase (500 aa).

A Zn(2+)-binding site is contributed by C29. A 'HIGH' region motif is present at residues 31–41; the sequence is VTVYDLCHLGH. Positions 213, 238, and 242 each coordinate Zn(2+). A 'KMSKS' region motif is present at residues 270 to 274; that stretch reads KMSKS. K273 contacts ATP.

This sequence belongs to the class-I aminoacyl-tRNA synthetase family. As to quaternary structure, monomer. Zn(2+) is required as a cofactor.

It is found in the cytoplasm. The catalysed reaction is tRNA(Cys) + L-cysteine + ATP = L-cysteinyl-tRNA(Cys) + AMP + diphosphate. In Prochlorococcus marinus (strain NATL2A), this protein is Cysteine--tRNA ligase.